The sequence spans 559 residues: DnaJ homolog subfamily C member 11 (559 aa).

The residue at position 2 (alanine 2) is an N-acetylalanine. The J domain maps to aspartate 14–glycine 82. Serine 204 carries the phosphoserine modification. Residues glutamine 415 to glutamate 457 adopt a coiled-coil conformation.

Belongs to the DNAJC11 family. Associates with the mitochondrial contact site and cristae organizing system (MICOS) complex, composed of at least MICOS10/MIC10, CHCHD3/MIC19, CHCHD6/MIC25, APOOL/MIC27, IMMT/MIC60, APOO/MIC23/MIC26 and QIL1/MIC13. This complex was also known under the names MINOS or MitOS complex. The MICOS complex associates with mitochondrial outer membrane proteins SAMM50, MTX1 and MTX2 (together described as components of the mitochondrial outer membrane sorting assembly machinery (SAM) complex) and DNAJC11, mitochondrial inner membrane protein TMEM11 and with HSPA9. The MICOS and SAM complexes together with DNAJC11 are part of a large protein complex spanning both membranes termed the mitochondrial intermembrane space bridging (MIB) complex.

The protein localises to the mitochondrion. It localises to the mitochondrion outer membrane. Required for mitochondrial inner membrane organization. Seems to function through its association with the MICOS complex and the mitochondrial outer membrane sorting assembly machinery (SAM) complex. The chain is DnaJ homolog subfamily C member 11 (Dnajc11) from Mus musculus (Mouse).